Consider the following 291-residue polypeptide: MEKDAPLAATGTPSLMAQAKEMMEGYTLRARKGLGQHFLISQGVLNKILLAADLKPTDTVIEVGPGLGVLTEELIKRAGQVIAVELDDKLVTALTEKFKAYPNFRIIHSDILKTSPAEILGQNIPYKLVANLPYYITSAVLRQFLEAEAKPELMVVMVQKEVAKNMVAQTGDMGLLTLSVRFYGNPSLVSVVPGGAFYPPPEVDSAIVKVAIPQAAIMQGVSEADFFKLARAGFGTRRKTLLNALAQGLGVSKQSVLALLNRAGIEPARRAETLSMEEWKMLCLVYTENPC.

S-adenosyl-L-methionine contacts are provided by H37, L39, G64, E85, D110, and N131.

Belongs to the class I-like SAM-binding methyltransferase superfamily. rRNA adenine N(6)-methyltransferase family. RsmA subfamily.

It localises to the cytoplasm. The enzyme catalyses adenosine(1518)/adenosine(1519) in 16S rRNA + 4 S-adenosyl-L-methionine = N(6)-dimethyladenosine(1518)/N(6)-dimethyladenosine(1519) in 16S rRNA + 4 S-adenosyl-L-homocysteine + 4 H(+). In terms of biological role, specifically dimethylates two adjacent adenosines (A1518 and A1519) in the loop of a conserved hairpin near the 3'-end of 16S rRNA in the 30S particle. May play a critical role in biogenesis of 30S subunits. This chain is Ribosomal RNA small subunit methyltransferase A, found in Dehalococcoides mccartyi (strain ATCC BAA-2266 / KCTC 15142 / 195) (Dehalococcoides ethenogenes (strain 195)).